Here is a 159-residue protein sequence, read N- to C-terminus: Succinate dehydrogenase [ubiquinone] cytochrome b small subunit, mitochondrial (159 aa).

A mitochondrion-targeting transit peptide spans 1 to 56 (MAVLWRLSAVCGAQGGRALLLRTPVVRPAHISAFLQDRPIPEWCGVQHIHLSPGHH). Topologically, residues 57–63 (SGSKAAS) are mitochondrial matrix. Residues 64–85 (LHWTSERVVSVLLLGLLPAAYL) form a helical membrane-spanning segment. Topologically, residues 86–90 (NPCSA) are mitochondrial intermembrane. The helical transmembrane segment at 91-111 (MDYSLAATLTLHGHWGLGQVV) threads the bilayer. H102 serves as a coordination point for heme b. At 112 to 120 (TDYVHGDAS) the chain is on the mitochondrial matrix side. Position 114 (Y114) interacts with a ubiquinone. A helical membrane pass occupies residues 121 to 142 (QKAAKAGLLALSALTFAGLCYF). The Mitochondrial intermembrane segment spans residues 143-159 (NYHDVGICKAVAMLWKL).

The protein belongs to the CybS family. Component of complex II composed of four subunits: the flavoprotein (FP) SDHA, iron-sulfur protein (IP) SDHB, and a cytochrome b560 composed of SDHC and SDHD.

The protein localises to the mitochondrion inner membrane. It participates in carbohydrate metabolism; tricarboxylic acid cycle. Its function is as follows. Membrane-anchoring subunit of succinate dehydrogenase (SDH) that is involved in complex II of the mitochondrial electron transport chain and is responsible for transferring electrons from succinate to ubiquinone (coenzyme Q). SDH also oxidizes malate to the non-canonical enol form of oxaloacetate, enol-oxaloacetate. Enol-oxaloacetate, which is a potent inhibitor of the succinate dehydrogenase activity, is further isomerized into keto-oxaloacetate. This Pongo abelii (Sumatran orangutan) protein is Succinate dehydrogenase [ubiquinone] cytochrome b small subunit, mitochondrial (SDHD).